We begin with the raw amino-acid sequence, 216 residues long: Putative holocytochrome-c1 synthase (216 aa).

A disordered region spans residues 1–46 (MQPEQLNQEEESKCPVPPEVRDAWLKSHGGKKPSEVHDTPHPTMLP).

Belongs to the cytochrome c-type heme lyase family.

Its subcellular location is the mitochondrion inner membrane. It catalyses the reaction holo-[cytochrome c] = apo-[cytochrome c] + heme b. Its function is as follows. Lyase that catalyzes the covalent linking of the heme group to the cytochrome C1 apoprotein to produce the mature functional cytochrome. This chain is Putative holocytochrome-c1 synthase, found in Schizosaccharomyces pombe (strain 972 / ATCC 24843) (Fission yeast).